Reading from the N-terminus, the 297-residue chain is Protoheme IX farnesyltransferase 1 (297 aa).

The next 9 membrane-spanning stretches (helical) occupy residues 23–43 (VVVL…RAGV), 45–65 (WSVL…AAVV), 93–113 (LPAL…LLVF), 117–137 (LTAW…TGFL), 145–165 (IVIG…AVSG), 171–191 (PLLL…ALAI), 216–236 (LHIL…YAIH), 241–261 (LYLV…WVLY), and 277–297 (IGYL…LLNL).

The protein belongs to the UbiA prenyltransferase family. Protoheme IX farnesyltransferase subfamily.

Its subcellular location is the cell inner membrane. The enzyme catalyses heme b + (2E,6E)-farnesyl diphosphate + H2O = Fe(II)-heme o + diphosphate. It participates in porphyrin-containing compound metabolism; heme O biosynthesis; heme O from protoheme: step 1/1. Its function is as follows. Converts heme B (protoheme IX) to heme O by substitution of the vinyl group on carbon 2 of heme B porphyrin ring with a hydroxyethyl farnesyl side group. The protein is Protoheme IX farnesyltransferase 1 of Pseudomonas putida (strain ATCC 47054 / DSM 6125 / CFBP 8728 / NCIMB 11950 / KT2440).